Reading from the N-terminus, the 665-residue chain is Probable potassium transport system protein Kup (665 aa).

The next 12 membrane-spanning stretches (helical) occupy residues 15–35, 48–68, 100–120, 147–167, 173–193, 219–239, 251–271, 292–312, 348–368, 378–398, 403–423, and 431–451; these read SFLI…LYVM, ITPD…TLLT, WLII…MLTP, IIII…HFGT, IFGP…IVNL, LGFF…ALYS, LTWP…AAWI, MMPS…AIIA, IYMP…VLYF, YGLS…NYLL, PLPI…SFLI, and KGGF…YIWI.

It belongs to the HAK/KUP transporter (TC 2.A.72) family.

The protein resides in the cell membrane. It carries out the reaction K(+)(in) + H(+)(in) = K(+)(out) + H(+)(out). Its function is as follows. Transport of potassium into the cell. Likely operates as a K(+):H(+) symporter. In Clostridium perfringens (strain ATCC 13124 / DSM 756 / JCM 1290 / NCIMB 6125 / NCTC 8237 / Type A), this protein is Probable potassium transport system protein Kup.